The primary structure comprises 86 residues: Putative defensin-like protein 234 (86 aa).

The N-terminal stretch at 1–26 (MRSATLLLVSCVLLSFILGNVKEVEA) is a signal peptide. Disulfide bonds link cysteine 34–cysteine 86, cysteine 44–cysteine 71, cysteine 52–cysteine 80, and cysteine 69–cysteine 82.

Belongs to the DEFL family.

The protein localises to the secreted. The protein is Putative defensin-like protein 234 (SCRL14) of Arabidopsis thaliana (Mouse-ear cress).